The primary structure comprises 1249 residues: Myosin-1 (1249 aa).

The tract at residues 1–40 (MGHSRRPAGGEKKSRFGRSKAAADVGDGRQAGGKPQVRKA) is disordered. Residues 50-729 (IGVSDLTLLS…TLFALEAMRD (680 aa)) form the Myosin motor domain. 143 to 150 (GESGAGKT) contacts ATP. Phosphoserine is present on Ser-371. Residues 418–500 (SIGILDIYGF…PGVFAALNDA (83 aa)) are actin-binding. IQ domains lie at 733–753 (HNMA…RTEC) and 754–779 (AIRI…QGHT). A TH1 domain is found at 787 to 979 (RRRMSILGSR…PGEPPNSVSK (193 aa)). 2 disordered regions span residues 959–1081 (DSYK…KAKA) and 1127–1249 (EAYL…DDDW). Composition is skewed to low complexity over residues 1026-1035 (PQTAAAQPTP) and 1043-1061 (PVAA…ASAR). The span at 1062–1073 (APPPPPPAPPAA) shows a compositional bias: pro residues. Residues 1074-1135 (AGPKKAKALY…PEAYLEEQVA (62 aa)) form the SH3 domain. The segment covering 1137-1149 (TPKPAPPPPPPVA) has biased composition (pro residues). Low complexity predominate over residues 1150 to 1170 (PRASPAPVNGSAAVAAAKAKA). Positions 1199–1221 (VSMNSQGDSSGASGRGTPSSVSN) are enriched in polar residues. Positions 1222–1235 (ASLAGGLAEALRAR) are enriched in low complexity.

It belongs to the TRAFAC class myosin-kinesin ATPase superfamily. Myosin family. As to quaternary structure, interacts (via IQ domains) with camA. In terms of processing, phosphorylation of the TEDS site (Ser-371) is required for the polarization of the actin cytoskeleton. Phosphorylation probably activates the myosin-I ATPase activity.

It is found in the cytoplasm. It localises to the cytoskeleton. The protein localises to the actin patch. In terms of biological role, type-I myosin implicated in the organization of the actin cytoskeleton. Required for proper actin cytoskeleton polarization. At the cell cortex, assembles in patch-like structures together with proteins from the actin-polymerizing machinery and promotes actin assembly. Functions as actin nucleation-promoting factor (NPF) for the Arp2/3 complex. Plays an important role in polarized growth, spore germination, hyphal morphogenesis, and septal wall formation. The protein is Myosin-1 (myoA) of Emericella nidulans (strain FGSC A4 / ATCC 38163 / CBS 112.46 / NRRL 194 / M139) (Aspergillus nidulans).